Here is a 135-residue protein sequence, read N- to C-terminus: Centromere protein S (135 aa).

Positions 103–135 are disordered; sequence SLEQKEKKKKKSVSGGNVSRNSDMDTVVPESKD.

The protein belongs to the TAF9 family. CENP-S/MHF1 subfamily. Heterodimer with CENPX, sometimes called MHF; this interaction stabilizes both partners. MHF heterodimers can assemble to form tetrameric structures. MHF also coassemble with CENPT-CENPW heterodimers at centromeres to form the tetrameric CENP-T-W-S-X complex. Forms a discrete complex with FANCM and CENPX, called FANCM-MHF; this interaction, probably mediated by direct binding between CENPS and FANCM, leads to synergistic activation of double-stranded DNA binding and strongly stimulates FANCM-mediated DNA remodeling. Recruited by FANCM to the Fanconi anemia (FA) core complex, which consists of CENPS, CENPX, FANCA, FANCB, FANCC, FANCE, FANCF, FANCG, FANCL, FANCM, FAAP24 and FAAP100. The FA core complex associates with Bloom syndrome (BLM) complex, which consists of at least BLM, DNA topoisomerase 3-alpha (TOP3A), RMI1/BLAP75, RPA1/RPA70 and RPA2/RPA32. The super complex between FA and BLM is called BRAFT. Component of the CENPA-CAD complex, composed of CENPI, CENPK, CENPL, CENPO, CENPP, CENPQ, CENPR and CENPS. The CENPA-CAD complex is probably recruited on centromeres by the CENPA-NAC complex, at least composed of CENPA, CENPC, CENPH, CENPM, CENPN, CENPT and CENPU.

The protein resides in the nucleus. Its subcellular location is the chromosome. It is found in the centromere. It localises to the kinetochore. Its function is as follows. DNA-binding component of the Fanconi anemia (FA) core complex. Required for the normal activation of the FA pathway, leading to monoubiquitination of the FANCI-FANCD2 complex in response to DNA damage, cellular resistance to DNA cross-linking drugs, and prevention of chromosomal breakage. In complex with CENPX (MHF heterodimer), crucial cofactor for FANCM in both binding and ATP-dependent remodeling of DNA. Stabilizes FANCM. In complex with CENPX and FANCM (but not other FANC proteins), rapidly recruited to blocked forks and promotes gene conversion at blocked replication forks. In complex with CENPT, CENPW and CENPX (CENP-T-W-S-X heterotetramer), involved in the formation of a functional kinetochore outer plate, which is essential for kinetochore-microtubule attachment and faithful mitotic progression. As a component of MHF and CENP-T-W-S-X complexes, binds DNA and bends it to form a nucleosome-like structure. DNA-binding function is fulfilled in the presence of CENPX, with the following preference for DNA substates: Holliday junction &gt; double-stranded &gt; splay arm &gt; single-stranded. Does not bind DNA on its own. The sequence is that of Centromere protein S (cenps) from Xenopus laevis (African clawed frog).